The following is a 353-amino-acid chain: Guanidino acid hydrolase, mitochondrial (353 aa).

Residues 1 to 33 (MLQLLKSSWVRSAGSGVVTWRASAGLFCPGTRQ) constitute a mitochondrion transit peptide. Residues 29-52 (PGTRQASDTSDTLHHPSPSSESQV) are disordered. The Mn(2+) site is built by H163 and H188. K194 is subject to N6-acetyllysine. K218 is modified (N6-acetyllysine; alternate). K218 bears the N6-succinyllysine; alternate mark. D279 is a Mn(2+) binding site.

The protein belongs to the arginase family. Agmatinase subfamily. Requires Mn(2+) as cofactor.

Its subcellular location is the mitochondrion. The enzyme catalyses 3-guanidinopropanoate + H2O = urea + beta-alanine. The catalysed reaction is 4-guanidinobutanoate + H2O = urea + 4-aminobutanoate. It carries out the reaction taurocyamine + H2O = urea + taurine. It catalyses the reaction L-arginine + H2O = urea + L-ornithine. Its pathway is nitrogen metabolism; urea cycle; L-ornithine and urea from L-arginine: step 1/1. Hydrolyzes linear guanidino acids to form urea and the corresponding amines. Displays specificity for substrates having a negatively charged head group and short chains including taurocyamine, guanidino propanoic and butanoic acids. May protect cells by detoxifying potentially harmful amounts of guanidino acids. Metabolizes L-arginine with low efficiency. The polypeptide is Guanidino acid hydrolase, mitochondrial (Agmat) (Rattus norvegicus (Rat)).